The primary structure comprises 78 residues: Small ribosomal subunit protein bS18c (78 aa).

Belongs to the bacterial ribosomal protein bS18 family. As to quaternary structure, part of the 30S ribosomal subunit.

It is found in the plastid. Its subcellular location is the chloroplast. The protein is Small ribosomal subunit protein bS18c of Oltmannsiellopsis viridis (Marine flagellate).